Consider the following 127-residue polypeptide: Peroxiredoxin-2 (127 aa).

A Thioredoxin domain is found at 1–125 (LFFYPLDFTF…ALRLVQGXQY (125 aa)). The active-site Cysteine sulfenic acid (-SOH) intermediate is cysteine 12. Serine 73 bears the Phosphoserine mark.

The protein belongs to the peroxiredoxin family. AhpC/Prx1 subfamily. In terms of assembly, homodimer; disulfide-linked, upon oxidation. 5 homodimers assemble to form a ring-like decamer. Interacts with TIPIN. Post-translationally, the enzyme can be inactivated by further oxidation of the cysteine sulfenic acid (C(P)-SOH) to sulphinic acid (C(P)-SO2H) instead of its condensation to a disulfide bond. It can be reactivated by forming a transient disulfide bond with sulfiredoxin SRXN1, which reduces the cysteine sulfinic acid in an ATP- and Mg-dependent manner. In terms of processing, acetylation increases resistance to transition to high molecular-mass complexes. Deacetylated by HDAC6 which decreases reducing activity.

The protein resides in the cytoplasm. It carries out the reaction a hydroperoxide + [thioredoxin]-dithiol = an alcohol + [thioredoxin]-disulfide + H2O. Functionally, thiol-specific peroxidase that catalyzes the reduction of hydrogen peroxide and organic hydroperoxides to water and alcohols, respectively. Plays a role in cell protection against oxidative stress by detoxifying peroxides and as sensor of hydrogen peroxide-mediated signaling events. Might participate in the signaling cascades of growth factors and tumor necrosis factor-alpha by regulating the intracellular concentrations of H(2)O(2). This Sus scrofa (Pig) protein is Peroxiredoxin-2 (PRDX2).